We begin with the raw amino-acid sequence, 308 residues long: Growth/differentiation factor 15 (308 aa).

The N-terminal stretch at 1–29 (MPGQELKTLNGSQMLLVLLVLLWPPHGGA) is a signal peptide. Residues 30-192 (VSLAEASRAS…HLRPRASRGR (163 aa)) constitute a propeptide that is removed on maturation. N70 carries N-linked (GlcNAc...) asparagine glycosylation. Positions 152-179 (APALHLRLSPPPSQSDQLLVKSSSSRPQ) are disordered. The segment covering 165–178 (QSDQLLVKSSSSRP) has biased composition (polar residues). 4 cysteine pairs are disulfide-bonded: C203–C210, C211–C274, C240–C305, and C244–C307.

Belongs to the TGF-beta family. As to quaternary structure, homodimer; disulfide-linked. Interacts with GFRAL and RET; ligand of GFRAL, which mediates GDF15 internalization and cellular signaling through interaction with RET via the formation of a 2:2:2 ternary complex composed of GDF15, GFRAL and RET. In terms of tissue distribution, detected in plasma (at protein level).

It localises to the secreted. Functionally, hormone produced in response to various stresses to confer information about those stresses to the brain, and trigger an aversive response, characterized by nausea and/or loss of appetite. The aversive response is both required to reduce continuing exposure to those stresses at the time of exposure and to promote avoidance behavior in the future. Acts by binding to its receptor, GFRAL, activating GFRAL-expressing neurons localized in the area postrema and nucleus tractus solitarius of the brainstem. It then triggers the activation of neurons localized within the parabrachial nucleus and central amygdala, which constitutes part of the 'emergency circuit' that shapes responses to stressful conditions. The GDF15-GFRAL signal induces expression of genes involved in metabolism, such as lipid metabolism in adipose tissues. Required for avoidance behavior in response to food allergens: induced downstream of mast cell activation to promote aversion and minimize harmful effects of exposure to noxious substances. In addition to suppress appetite, also promotes weight loss by enhancing energy expenditure in muscle: acts by increasing calcium futile cycling in muscle. Contributes to the effect of metformin, an anti-diabetic drug, on appetite reduction and weight loss: produced in the kidney in response to metformin treatment, thereby activating the GDF15-GFRAL response, leading to reduced appetite and weight. Produced in response to anticancer drugs, such as camptothecin or cisplatin, promoting nausea and contributing to malnutrition. Overproduced in many cancers, promoting anorexia in cancer (cachexia). Responsible for the risk of nausea during pregnancy: high levels of GDF15 during pregnancy, mostly originating from embryos, are associated with increased nausea. Maternal sensitivity to nausea is probably determined by pre-pregnancy exposure to GDF15, females with naturally high level of GDF15 being less susceptible to nausea than females with low levels of GDF15 before pregnancy. Promotes metabolic adaptation in response to systemic inflammation caused by bacterial and viral infections in order to promote tissue tolerance and prevent tissue damage. Inhibits growth hormone signaling on hepatocytes. The sequence is that of Growth/differentiation factor 15 from Macaca fascicularis (Crab-eating macaque).